Consider the following 134-residue polypeptide: ATP synthase epsilon chain (134 aa).

This sequence belongs to the ATPase epsilon chain family. In terms of assembly, F-type ATPases have 2 components, CF(1) - the catalytic core - and CF(0) - the membrane proton channel. CF(1) has five subunits: alpha(3), beta(3), gamma(1), delta(1), epsilon(1). CF(0) has three main subunits: a, b and c.

It localises to the cellular thylakoid membrane. Produces ATP from ADP in the presence of a proton gradient across the membrane. This is ATP synthase epsilon chain from Prochlorococcus marinus (strain MIT 9515).